Reading from the N-terminus, the 763-residue chain is Endoplasmic reticulum membrane sensor NFE2L1 (763 aa).

The helical; Signal-anchor for type II membrane protein transmembrane segment at 7–24 (YLTEGLLQFTILLSLIGV) threads the bilayer. Residues 108–150 (DPEGSVSGSQPSSGLALESSSGLQDVTGPDNGVRESETEQGFS) form a disordered region. Residues 116–131 (SQPSSGLALESSSGLQ) are compositionally biased toward low complexity. A cholesterol recognition/amino acid consensus (CRAC) region region spans residues 180–188 (IFDYSHRQK). 2 N-linked (GlcNAc...) asparagine glycosylation sites follow: Asn338 and Asn350. Positions 369-373 (SPEVE) are CPD. Asn413 carries N-linked (GlcNAc...) asparagine glycosylation. Disordered regions lie at residues 460 to 523 (EEEF…DSET) and 585 to 604 (TLKK…QMSR). The Destruction motif motif lies at 466–470 (DSGLS). Residues 466 to 514 (DSGLSLDSSHSPSSLSSSEGSSSSSSSSSSSSSSSASSSASSSFSEEGA) show a composition bias toward low complexity. Ser519 is subject to Phosphoserine; by CK2. Residues 589 to 604 (GSKEKQADFLDKQMSR) show a composition bias toward basic and acidic residues. Ser590 carries the post-translational modification Phosphoserine; by PKA. The region spanning 645–708 (LIRDIRRRGK…RQMKQKVQSL (64 aa)) is the bZIP domain. The tract at residues 647 to 666 (RDIRRRGKNKMAAQNCRKRK) is basic motif. A leucine-zipper region spans residues 673-687 (LERDVEDLQRDKARL). The short motif at 752-759 (RRQERKPK) is the Nuclear localization signal element.

The protein belongs to the bZIP family. CNC subfamily. In terms of assembly, interacts with KEAP1. Interacts (via CPD region) with FBXW7; leading to its ubiquitination and degradation. Interacts with SYVN1/HRD1; leading to its ubiquitination and degradation. Interacts (when ubiquitinated) with DDI2; leading to its cleavage. As to quaternary structure, interacts (via the bZIP domain) with small MAF protein (MAFF, MAFG or MAFK); required for binding to antioxidant response elements (AREs) on DNA. Interacts (via Destruction motif) with BTRC; leading to its ubiquitination and degradation. Interacts with CEBPB; the heterodimer represses expression of DSPP during odontoblast differentiation. Interacts with MOTS-c, a peptide produced by the mitochondrially encoded 12S rRNA MT-RNR1. Cleaved at Leu-104 by the aspartyl protease DDI2 following retrotranslocation, releasing the protein from the endoplasmic reticulum membrane and forming the transcription factor NRF1 that translocates into the nucleus. Ubiquitination is prerequisite for cleavage by aspartyl protease DDI2. Post-translationally, N-glycosylated in normal conditions, when it has a single-pass type II membrane protein topology, with the DNA-binding domain facing the endoplasmic reticulum lumen. Deglycosylated during retrotranslocation to the cytosolic side of the membrane, to have a single-pass type III membrane protein topology with the major part of the protein facing the cytosol. In terms of processing, ubiquitinated by the SCF(FBXW7) complex and SYVN1/HRD1, leading to its degradation by the proteasome. Ubiquitinated during retrotranslocation to the cytosolic side of the membrane: ubiquitination does not lead to degradation and is required for processing by the aspartyl protease DDI2 and subsequent release from the endoplasmic reticulum membrane. Phosphorylation by CK2 at Ser-519 inhibits transcription factor activity, possibly by affecting DNA-binding activity. Phosphorylation at Ser-590 is required for interaction with CEBPB. Post-translationally, ubiquitinated by the SCF(BTRC) complex in the nucleus, leading to its degradation by the proteasome.

It localises to the endoplasmic reticulum membrane. It is found in the nucleus. In terms of biological role, endoplasmic reticulum membrane sensor that translocates into the nucleus in response to various stresses to act as a transcription factor. Constitutes a precursor of the transcription factor NRF1. Able to detect various cellular stresses, such as cholesterol excess, oxidative stress or proteasome inhibition. In response to stress, it is released from the endoplasmic reticulum membrane following cleavage by the protease DDI2 and translocates into the nucleus to form the transcription factor NRF1. Acts as a key sensor of cholesterol excess: in excess cholesterol conditions, the endoplasmic reticulum membrane form of the protein directly binds cholesterol via its CRAC motif, preventing cleavage and release of the transcription factor NRF1, thereby allowing expression of genes promoting cholesterol removal, such as CD36. Involved in proteasome homeostasis: in response to proteasome inhibition, it is released from the endoplasmic reticulum membrane, translocates to the nucleus and activates expression of genes encoding proteasome subunits. CNC-type bZIP family transcription factor that translocates to the nucleus and regulates expression of target genes in response to various stresses. Heterodimerizes with small-Maf proteins (MAFF, MAFG or MAFK) and binds DNA motifs including the antioxidant response elements (AREs), which regulate expression of genes involved in oxidative stress response. Activates or represses expression of target genes, depending on the context. Plays a key role in cholesterol homeostasis by acting as a sensor of cholesterol excess: in low cholesterol conditions, translocates into the nucleus and represses expression of genes involved in defense against cholesterol excess, such as CD36. In excess cholesterol conditions, the endoplasmic reticulum membrane form of the protein directly binds cholesterol via its CRAC motif, preventing cleavage and release of the transcription factor NRF1, thereby allowing expression of genes promoting cholesterol removal. Critical for redox balance in response to oxidative stress: acts by binding the AREs motifs on promoters and mediating activation of oxidative stress response genes, such as GCLC, GCLM, GSS, MT1 and MT2. Plays an essential role during fetal liver hematopoiesis: probably has a protective function against oxidative stress and is involved in lipid homeostasis in the liver. Involved in proteasome homeostasis: in response to proteasome inhibition, mediates the 'bounce-back' of proteasome subunits by translocating into the nucleus and activating expression of genes encoding proteasome subunits. Also involved in regulating glucose flux. Together with CEBPB; represses expression of DSPP during odontoblast differentiation. In response to ascorbic acid induction, activates expression of SP7/Osterix in osteoblasts. In Bos taurus (Bovine), this protein is Endoplasmic reticulum membrane sensor NFE2L1.